We begin with the raw amino-acid sequence, 420 residues long: Glutamyl-tRNA reductase (420 aa).

Residues 49-52, S110, 115-117, and Q121 each bind substrate; these read TCNR and EHQ. The Nucleophile role is filled by C50. NADP(+) is bound at residue 190–195; it reads GSGTIN.

Belongs to the glutamyl-tRNA reductase family. As to quaternary structure, homodimer.

It carries out the reaction (S)-4-amino-5-oxopentanoate + tRNA(Glu) + NADP(+) = L-glutamyl-tRNA(Glu) + NADPH + H(+). Its pathway is porphyrin-containing compound metabolism; protoporphyrin-IX biosynthesis; 5-aminolevulinate from L-glutamyl-tRNA(Glu): step 1/2. In terms of biological role, catalyzes the NADPH-dependent reduction of glutamyl-tRNA(Glu) to glutamate 1-semialdehyde (GSA). The protein is Glutamyl-tRNA reductase of Wigglesworthia glossinidia brevipalpis.